Reading from the N-terminus, the 198-residue chain is Adenylyl-sulfate kinase (198 aa).

ATP is bound at residue 31 to 38; that stretch reads GLSGAGKS. The Phosphoserine intermediate role is filled by Ser105.

Belongs to the APS kinase family.

The catalysed reaction is adenosine 5'-phosphosulfate + ATP = 3'-phosphoadenylyl sulfate + ADP + H(+). It participates in sulfur metabolism; hydrogen sulfide biosynthesis; sulfite from sulfate: step 2/3. Functionally, catalyzes the synthesis of activated sulfate. This chain is Adenylyl-sulfate kinase, found in Shewanella amazonensis (strain ATCC BAA-1098 / SB2B).